A 607-amino-acid chain; its full sequence is Serine/threonine-protein kinase sid2 (607 aa).

4 positions are modified to phosphoserine: S56, S60, S65, and S86. Residues 93-108 (DRSGELSYKDNNHWSD) show a composition bias toward basic and acidic residues. Residues 93 to 118 (DRSGELSYKDNNHWSDRSSTGSPRWE) are disordered. Polar residues predominate over residues 109-118 (RSSTGSPRWE). One can recognise a Protein kinase domain in the interval 208-508 (FQTITQVGQG…LKQVMQHPYF (301 aa)). Residues 214-222 (VGQGGYGSV) and K237 contribute to the ATP site. A Phosphotyrosine modification is found at Y219. The active-site Proton acceptor is D331. A Phosphoserine modification is found at S402. Residues 509 to 589 (SKIDWKNVRT…RHQKNSHPTS (81 aa)) enclose the AGC-kinase C-terminal domain. The segment at 586–607 (HPTSSSSALSSPLSAPSFGTLL) is disordered. Positions 589–607 (SSSSALSSPLSAPSFGTLL) are enriched in low complexity.

It belongs to the protein kinase superfamily. Ser/Thr protein kinase family. Interacts with mob1 and cdc11.

It localises to the cytoplasm. The protein resides in the cytoskeleton. The protein localises to the microtubule organizing center. Its subcellular location is the spindle pole body. The enzyme catalyses L-seryl-[protein] + ATP = O-phospho-L-seryl-[protein] + ADP + H(+). The catalysed reaction is L-threonyl-[protein] + ATP = O-phospho-L-threonyl-[protein] + ADP + H(+). In terms of biological role, part of a signaling pathway. Required for initiation of medial ring constriction and septation. This Schizosaccharomyces pombe (strain 972 / ATCC 24843) (Fission yeast) protein is Serine/threonine-protein kinase sid2 (sid2).